The sequence spans 519 residues: Cytochrome P450 709B1 (519 aa).

The helical transmembrane segment at 1-21 (MGLVIFLALIVLILIIGLRIF) threads the bilayer. Residue C464 participates in heme binding.

Belongs to the cytochrome P450 family. It depends on heme as a cofactor. Highly expressed in siliques.

The protein localises to the membrane. In terms of biological role, involved in stress response. Does not function as cytokinin hydroxylase in yeast heterologous system. The sequence is that of Cytochrome P450 709B1 from Arabidopsis thaliana (Mouse-ear cress).